A 156-amino-acid polypeptide reads, in one-letter code: ATP synthase subunit b (156 aa).

A helical transmembrane segment spans residues 3-23; it reads ITLTIFAQALAFAGLIWIVAT.

The protein belongs to the ATPase B chain family. F-type ATPases have 2 components, F(1) - the catalytic core - and F(0) - the membrane proton channel. F(1) has five subunits: alpha(3), beta(3), gamma(1), delta(1), epsilon(1). F(0) has three main subunits: a(1), b(2) and c(10-14). The alpha and beta chains form an alternating ring which encloses part of the gamma chain. F(1) is attached to F(0) by a central stalk formed by the gamma and epsilon chains, while a peripheral stalk is formed by the delta and b chains.

It is found in the cell inner membrane. In terms of biological role, f(1)F(0) ATP synthase produces ATP from ADP in the presence of a proton or sodium gradient. F-type ATPases consist of two structural domains, F(1) containing the extramembraneous catalytic core and F(0) containing the membrane proton channel, linked together by a central stalk and a peripheral stalk. During catalysis, ATP synthesis in the catalytic domain of F(1) is coupled via a rotary mechanism of the central stalk subunits to proton translocation. Component of the F(0) channel, it forms part of the peripheral stalk, linking F(1) to F(0). This is ATP synthase subunit b from Xanthomonas campestris pv. campestris (strain 8004).